Consider the following 493-residue polypeptide: Cytochrome c-552 (493 aa).

A signal peptide spans 1 to 25 (MEKKLKSWQGWLLFCGAMAVVFVLG). Histidine 116 provides a ligand contact to heme c. Positions 144, 147, and 148 each coordinate heme. Positions 182, 185, 186, 224, 227, and 228 each coordinate heme c. 4 residues coordinate Ca(2+): glutamate 230, tyrosine 231, lysine 276, and glutamine 278. Substrate is bound at residue tyrosine 231. Histidine 279 is a binding site for substrate. Histidine 290, cysteine 297, cysteine 300, histidine 301, histidine 315, cysteine 328, cysteine 331, histidine 332, and histidine 407 together coordinate heme c.

This sequence belongs to the cytochrome c-552 family. The cofactor is Ca(2+). It depends on heme c as a cofactor.

It localises to the periplasm. The catalysed reaction is 6 Fe(III)-[cytochrome c] + NH4(+) + 2 H2O = 6 Fe(II)-[cytochrome c] + nitrite + 8 H(+). The protein operates within nitrogen metabolism; nitrate reduction (assimilation). Catalyzes the reduction of nitrite to ammonia, consuming six electrons in the process. The polypeptide is Cytochrome c-552 (Bacteroides fragilis (strain ATCC 25285 / DSM 2151 / CCUG 4856 / JCM 11019 / LMG 10263 / NCTC 9343 / Onslow / VPI 2553 / EN-2)).